A 491-amino-acid polypeptide reads, in one-letter code: Keratin, type I cytoskeletal 24 (491 aa).

The segment at 1–23 (MFCSAQKGSCSSRVSSSGAVGSR) is disordered. Residues 1-117 (MFCSAQKGSC…GYDGGLLSGS (117 aa)) form a head region. The span at 8 to 23 (GSCSSRVSSSGAVGSR) shows a compositional bias: low complexity. Positions 118 to 153 (EKQTMQGLNDRLANYLDKVRALEEANTDLETKIKDW) are coil 1A. In terms of domain architecture, IF rod spans 118–432 (EKQTMQGLND…RLLNGDGGGC (315 aa)). The tract at residues 154 to 174 (YGRHGSGKDGPGRDYSQYCSV) is linker 1. Residues 175-266 (IEDLKNQIIS…KNHEEEMKCL (92 aa)) are coil 1B. The segment at 267–289 (QGSSGGDVTVEMNATPGTDLTKL) is linker 12. Residues 290–428 (LNDMRAQYEA…ETYRRLLNGD (139 aa)) are coil 2. A tail region spans residues 429 to 491 (GGGCDYRNLV…VSNISEVKIK (63 aa)).

The protein belongs to the intermediate filament family. Heterotetramer of two type I and two type II keratins.

The chain is Keratin, type I cytoskeletal 24 (Krt24) from Rattus norvegicus (Rat).